Reading from the N-terminus, the 125-residue chain is Short coiled-coil protein (125 aa).

A disordered region spans residues 1 to 31 (MSKMDGLSTGEEEDSTFTSISLEDDTDHSLK). Residues 43 to 101 (KMMNADMDAVDAENQVELEEKTRLINQVLELQHTLEDLSARVDAVKEENLKLKSENQVL) are a coiled coil.

It belongs to the SCOC family. Homodimer. Interacts with ARL1, ARL2 and ARL3. Directly interacts with FEZ1 and UVRAG. The interaction with UVRAG is reduced by amino acid starvation, but the complex is stabilized in the presence of FEZ1. Interacts with NRBF2.

It localises to the golgi apparatus membrane. Its subcellular location is the golgi apparatus. It is found in the trans-Golgi network. The protein localises to the cytoplasm. The protein resides in the cytosol. Functionally, positive regulator of amino acid starvation-induced autophagy. This chain is Short coiled-coil protein (Scoc), found in Mus musculus (Mouse).